The following is a 370-amino-acid chain: Phospho-N-acetylmuramoyl-pentapeptide-transferase (370 aa).

11 helical membrane-spanning segments follow: residues 15–35, 44–64, 93–113, 115–135, 155–175, 183–203, 213–233, 240–260, 268–288, 296–316, and 347–367; these read PLEGKVSAGVLAVVVYAAAFA, LLSLPLLIATLIAAIVTWWGV, MGGLLVVPVGVIVGGLISWSG, AAEQLLAVAFITLAYMVVGGI, LLLQALAAVIFLIWAGMRGWI, FDINLPLNWLIWPLAVFVFLA, GLDGLAAGCGALVFTGMALQL, GDPSLAGFCMAMAGCWIGFLV, VFMGDTGSLAMGGALTAVALL, LIMGGIFLAESLSVIIQVWVF, and QLVVPGFWLATVFLVLIGIFF.

This sequence belongs to the glycosyltransferase 4 family. MraY subfamily. Mg(2+) serves as cofactor.

It is found in the cell inner membrane. The enzyme catalyses UDP-N-acetyl-alpha-D-muramoyl-L-alanyl-gamma-D-glutamyl-meso-2,6-diaminopimeloyl-D-alanyl-D-alanine + di-trans,octa-cis-undecaprenyl phosphate = di-trans,octa-cis-undecaprenyl diphospho-N-acetyl-alpha-D-muramoyl-L-alanyl-D-glutamyl-meso-2,6-diaminopimeloyl-D-alanyl-D-alanine + UMP. Its pathway is cell wall biogenesis; peptidoglycan biosynthesis. Its function is as follows. Catalyzes the initial step of the lipid cycle reactions in the biosynthesis of the cell wall peptidoglycan: transfers peptidoglycan precursor phospho-MurNAc-pentapeptide from UDP-MurNAc-pentapeptide onto the lipid carrier undecaprenyl phosphate, yielding undecaprenyl-pyrophosphoryl-MurNAc-pentapeptide, known as lipid I. The sequence is that of Phospho-N-acetylmuramoyl-pentapeptide-transferase from Synechococcus sp. (strain CC9311).